Here is a 344-residue protein sequence, read N- to C-terminus: MGIDERKKQILRAIVLDYIATAEPVGSRTIARKYGLGISPATIRNEMADLEEMGYLEQPHTSAGRIPSQRGYRYYVDELMEPETPAEEEKLIIKTNYQAKVKSISEVIERTGQLMSQLTSYAALVSTPRVTGSTVQHVQLIAMGGGKAMVLVVTEPEKVHTRVIDLPENITAEDLETVSRVMNAKIRGHSLNDIRITILREIYLELLRHKAVVEYIMDLIEDSGESTEDRVYLGGILNILNQPEFRNVEKMKTLLSLLDQEALLSSLLAEQAGQEEGITVLIGDEFKCDLIQGCSLVSARYGVEGRAVGALAVLGPSRMDYARVTGLVEYLTRNLSRVLEKLYR.

This sequence belongs to the HrcA family.

Negative regulator of class I heat shock genes (grpE-dnaK-dnaJ and groELS operons). Prevents heat-shock induction of these operons. This Desulforudis audaxviator (strain MP104C) protein is Heat-inducible transcription repressor HrcA.